The primary structure comprises 115 residues: Large ribosomal subunit protein uL24 (115 aa).

A disordered region spans residues 49–68 (NMKTKHHPPSKDQEKGSITK).

It belongs to the universal ribosomal protein uL24 family. Part of the 50S ribosomal subunit.

In terms of biological role, one of two assembly initiator proteins, it binds directly to the 5'-end of the 23S rRNA, where it nucleates assembly of the 50S subunit. Its function is as follows. One of the proteins that surrounds the polypeptide exit tunnel on the outside of the subunit. The polypeptide is Large ribosomal subunit protein uL24 (Phytoplasma australiense).